The sequence spans 66 residues: Toxin Aah6 (66 aa).

In terms of domain architecture, LCN-type CS-alpha/beta spans 2-65 (RDGYVVKNGT…LYGDDGTYCS (64 aa)). N-linked (GlcNAc...) asparagine glycosylation occurs at Asn9. 4 cysteine pairs are disulfide-bonded: Cys13–Cys64, Cys17–Cys40, Cys26–Cys45, and Cys30–Cys47.

The protein belongs to the long (4 C-C) scorpion toxin superfamily. Sodium channel inhibitor family. Beta subfamily. N-glycans are core-fucosylated, heterogeneous and short which could be the result of extensive trimming. In terms of tissue distribution, expressed by the venom gland.

The protein localises to the secreted. Its function is as follows. Beta toxins bind voltage-independently at site-4 of sodium channels and shift the voltage of activation toward more negative potentials thereby affecting sodium channel activation and promoting spontaneous and repetitive firing. This toxin is active only on insects. This toxin has very low anti-insect activity. The sequence is that of Toxin Aah6 from Androctonus australis (Sahara scorpion).